The sequence spans 320 residues: uncharacterized protein (320 aa).

Interacts with VP1054, VP39 and VP80.

The protein resides in the virion. Its subcellular location is the host nucleus. It is found in the host cytoplasm. In terms of biological role, plays a role in nucleocapsid assembly and is essential for viral replication. Distributed over the cylindrical capsid sheath of nucleocapsid. This is an uncharacterized protein from Lepidoptera (butterflies and moths).